The chain runs to 306 residues: Pyridoxal 5'-phosphate synthase subunit PdxS (306 aa).

Residue D36 participates in D-ribose 5-phosphate binding. K93 functions as the Schiff-base intermediate with D-ribose 5-phosphate in the catalytic mechanism. G165 is a D-ribose 5-phosphate binding site. R177 serves as a coordination point for D-glyceraldehyde 3-phosphate. Residues G226 and G247–S248 contribute to the D-ribose 5-phosphate site.

Belongs to the PdxS/SNZ family. As to quaternary structure, in the presence of PdxT, forms a dodecamer of heterodimers.

It catalyses the reaction aldehydo-D-ribose 5-phosphate + D-glyceraldehyde 3-phosphate + L-glutamine = pyridoxal 5'-phosphate + L-glutamate + phosphate + 3 H2O + H(+). Its pathway is cofactor biosynthesis; pyridoxal 5'-phosphate biosynthesis. Its function is as follows. Catalyzes the formation of pyridoxal 5'-phosphate from ribose 5-phosphate (RBP), glyceraldehyde 3-phosphate (G3P) and ammonia. The ammonia is provided by the PdxT subunit. Can also use ribulose 5-phosphate and dihydroxyacetone phosphate as substrates, resulting from enzyme-catalyzed isomerization of RBP and G3P, respectively. This chain is Pyridoxal 5'-phosphate synthase subunit PdxS, found in Corynebacterium urealyticum (strain ATCC 43042 / DSM 7109).